We begin with the raw amino-acid sequence, 444 residues long: Phosphatidate cytidylyltransferase 2 (444 aa).

The segment covering 1 to 38 (MTELRQRVVREDAPPEDKESESEAKLDGETASDSESRA) has biased composition (basic and acidic residues). The disordered stretch occupies residues 1–48 (MTELRQRVVREDAPPEDKESESEAKLDGETASDSESRAETAPLPTSVD). Serine 20 carries the post-translational modification Phosphoserine. Residue threonine 30 is modified to Phosphothreonine. A phosphoserine mark is found at serine 32, serine 34, and serine 36. Threonine 50 is modified (phosphothreonine). Helical transmembrane passes span 78 to 98 (MIAF…MIVM), 129 to 149 (WYFL…DYFF), 165 to 185 (HRFI…LSLV), 212 to 232 (LVIH…SCVI), 261 to 281 (GFIG…YVMS), and 339 to 359 (IALS…ASGF).

This sequence belongs to the CDS family. As to quaternary structure, homodimer. In terms of tissue distribution, ubiquitous. Expressed in the ganglion cell layer and inner nuclear layer of the retina.

It is found in the endoplasmic reticulum membrane. The enzyme catalyses a 1,2-diacyl-sn-glycero-3-phosphate + CTP + H(+) = a CDP-1,2-diacyl-sn-glycerol + diphosphate. It catalyses the reaction 1-octadecanoyl-2-(5Z,8Z,11Z,14Z-eicosatetraenoyl)-sn-glycero-3-phosphate + CTP + H(+) = 1-octadecanoyl-2-(5Z,8Z,11Z,14Z-eicosatetraenoyl)-sn-glycero-3-cytidine-5'-diphosphate + diphosphate. It carries out the reaction 1-octadecanoyl-2-(9Z,12Z-octadecadienoyl)-sn-glycero-3-phosphate + CTP + H(+) = 1-octadecanoyl-2-(9Z,12Z-octadecadienoyl)-sn-glycero-3-cytidine-5'-diphosphate + diphosphate. The catalysed reaction is 1-hexadecanoyl-2-(5Z,8Z,11Z,14Z-eicosatetraenoyl)-sn-glycero-3-phosphate + CTP + H(+) = 1-hexadecanoyl-2-(5Z,8Z,11Z,14Z-eicosatetraenoyl)-sn-glycero-3-cytidine-5'-diphosphate + diphosphate. The enzyme catalyses 1,2-di-(5Z,8Z,11Z,14Z)-eicosatetraenoyl-sn-glycero-3-phosphate + CTP + H(+) = 1,2-di-(5Z,8Z,11Z,14Z-eicosatetraenoyl)-sn-glycero-3-cytidine-5'-diphosphate + diphosphate. It catalyses the reaction 1-octadecanoyl-2-(9Z-octadecenoyl)-sn-glycero-3-phosphate + CTP + H(+) = 1-octadecanoyl-2-(9Z-octadecenoyl)-sn-glycero-3-cytidine-5'-diphosphate + diphosphate. It carries out the reaction 1-octadecanoyl-2-(4Z,7Z,10Z,13Z,16Z,19Z-docosahexaenoyl)-sn-glycero-3-phosphate + CTP + H(+) = 1-octadecanoyl-2-(4Z,7Z,10Z,13Z,16Z,19Z-docosahexaenoyl)-sn-glycero-3-cytidine-5'-diphosphate + diphosphate. The catalysed reaction is 1,2-di-(9Z,12Z-octadecadienoyl)-sn-glycero-3-phosphate + CTP + H(+) = 1,2-di-(9Z,12Z-octadecadienoyl)-sn-glycero-3-cytidine-5'-diphosphate + diphosphate. The enzyme catalyses 1,2-di-(9Z-octadecenoyl)-sn-glycero-3-phosphate + CTP + H(+) = 1,2-di-(9Z-octadecenoyl)-sn-glycero-3-cytidine-5'-diphosphate + diphosphate. It functions in the pathway phospholipid metabolism; CDP-diacylglycerol biosynthesis; CDP-diacylglycerol from sn-glycerol 3-phosphate: step 3/3. Catalyzes the conversion of phosphatidic acid (PA) to CDP-diacylglycerol (CDP-DAG), an essential intermediate in the synthesis of phosphatidylglycerol, cardiolipin and phosphatidylinositol. Exhibits specificity for the nature of the acyl chains at the sn-1 and sn-2 positions in the substrate, PA and the preferred acyl chain composition is 1-stearoyl-2-arachidonoyl-sn-phosphatidic acid. Plays an important role in regulating the growth and maturation of lipid droplets which are storage organelles at the center of lipid and energy homeostasis. This is Phosphatidate cytidylyltransferase 2 from Mus musculus (Mouse).